Reading from the N-terminus, the 141-residue chain is Protein wingless (141 aa).

Serine 3 carries O-palmitoleoyl serine; by PORCN lipidation. Over residues 40-49 (TDLEAPTQRN) the composition is skewed to polar residues. The disordered stretch occupies residues 40 to 61 (TDLEAPTQRNDAAPHRAPRRER). Residues cysteine 107 and cysteine 122 are joined by a disulfide bond. 2 N-linked (GlcNAc...) asparagine glycosylation sites follow: asparagine 108 and asparagine 138.

The protein belongs to the Wnt family. In terms of processing, palmitoleoylated by porcupine. The lipid group functions as a sorting signal, targeting the ligand to polarized vesicles that transport wg to unique sites at the cell surface. Depalmitoleoylated by notum, leading to inhibit Wnt signaling pathway.

It is found in the secreted. The protein localises to the extracellular space. The protein resides in the extracellular matrix. Its function is as follows. Segment polarity protein. Binds to the frizzled seven-transmembrane receptors. This protein is probably a growth factor. The polypeptide is Protein wingless (WG) (Manduca sexta (Tobacco hawkmoth)).